Here is a 493-residue protein sequence, read N- to C-terminus: D-aminoacyl-tRNA deacylase (493 aa).

Basic and acidic residues predominate over residues Asp22–Ala37. 2 disordered regions span residues Asp22–Tyr44 and Pro441–Glu493.

Belongs to the DtdA deacylase family. Monomer. Zn(2+) is required as a cofactor.

The catalysed reaction is a D-aminoacyl-tRNA + H2O = a tRNA + a D-alpha-amino acid + H(+). It catalyses the reaction glycyl-tRNA(Ala) + H2O = tRNA(Ala) + glycine + H(+). Its function is as follows. D-aminoacyl-tRNA deacylase with broad substrate specificity. By recycling D-aminoacyl-tRNA to D-amino acids and free tRNA molecules, this enzyme counteracts the toxicity associated with the formation of D-aminoacyl-tRNA entities in vivo. This chain is D-aminoacyl-tRNA deacylase, found in Halorubrum lacusprofundi (strain ATCC 49239 / DSM 5036 / JCM 8891 / ACAM 34).